Reading from the N-terminus, the 431-residue chain is MRILLDNISIIPVSGSNSFIEKGYLLIEDVFIKELGTGKAPEGEFDHIIDGENQVLLPGFINAHTHAAMTLLRGYADDLPLMEWLENKIWPLEAKLTPEDIYWGTMLAIVEMIKSGTTTFNDMYFCMDEVARAVELSGMRAVLARGMVGVGPESEQAIEDSRELIGKWQGQAGGRISFRLGPHAPYTCPPAYLERVMQLSDELQAGIHIHVAETRVEYEDILKQYGKTPVSHLESLGLFQGRQVLAAHCVHLNEEEIGILHQYQVGVAHNPESNMKLASGIAPVPRMLESGIAVALGTDGASSNNNLDMLQEMRSSSFLHKVNTMDPMVLPAYQALEMATANGAISLGMGNELGRLEPGYRADMIIMNLKEAHMTPRYDLLANIVYSAQASDVNSVIIDGKIVMENREIKTFDEQEVLAKARETARKLVGK.

Positions 64 and 66 each coordinate Zn(2+). Substrate-binding residues include E93, R145, and H183. A Zn(2+)-binding site is contributed by H210. Residues E213 and D299 each coordinate substrate. D299 is a binding site for Zn(2+).

Belongs to the metallo-dependent hydrolases superfamily. MTA/SAH deaminase family. It depends on Zn(2+) as a cofactor.

The enzyme catalyses S-adenosyl-L-homocysteine + H2O + H(+) = S-inosyl-L-homocysteine + NH4(+). It carries out the reaction S-methyl-5'-thioadenosine + H2O + H(+) = S-methyl-5'-thioinosine + NH4(+). Its function is as follows. Catalyzes the deamination of 5-methylthioadenosine and S-adenosyl-L-homocysteine into 5-methylthioinosine and S-inosyl-L-homocysteine, respectively. Is also able to deaminate adenosine. The sequence is that of 5-methylthioadenosine/S-adenosylhomocysteine deaminase from Syntrophomonas wolfei subsp. wolfei (strain DSM 2245B / Goettingen).